The sequence spans 1156 residues: Chromosome partition protein Smc (1156 aa).

37–44 (PNGAGKSN) is an ATP binding site. Residues 167–499 (SGIGEYERKK…AIEREVRSFS (333 aa)) adopt a coiled-coil conformation. Positions 509–624 (KGVYGSVSEL…VENFESAKAI (116 aa)) constitute an SMC hinge domain. Positions 654 to 1001 (GELNKRYYEE…EETENKKRKV (348 aa)) form a coiled coil.

It belongs to the SMC family. As to quaternary structure, homodimer.

The protein resides in the cytoplasm. Required for chromosome condensation and partitioning. The protein is Chromosome partition protein Smc of Aquifex aeolicus (strain VF5).